Consider the following 297-residue polypeptide: Light-independent protochlorophyllide reductase iron-sulfur ATP-binding protein (297 aa).

ATP contacts are provided by residues 41-46 (GIGKST) and K70. S45 is a Mg(2+) binding site. 2 residues coordinate [4Fe-4S] cluster: C126 and C160. ATP is bound by residues 211–212 (NR) and 235–237 (PDL).

It belongs to the NifH/BchL/ChlL family. As to quaternary structure, homodimer. Protochlorophyllide reductase is composed of three subunits; BchL, BchN and BchB. The cofactor is [4Fe-4S] cluster.

It carries out the reaction chlorophyllide a + oxidized 2[4Fe-4S]-[ferredoxin] + 2 ADP + 2 phosphate = protochlorophyllide a + reduced 2[4Fe-4S]-[ferredoxin] + 2 ATP + 2 H2O. The protein operates within porphyrin-containing compound metabolism; bacteriochlorophyll biosynthesis (light-independent). Functionally, component of the dark-operative protochlorophyllide reductase (DPOR) that uses Mg-ATP and reduced ferredoxin to reduce ring D of protochlorophyllide (Pchlide) to form chlorophyllide a (Chlide). This reaction is light-independent. The L component serves as a unique electron donor to the NB-component of the complex, and binds Mg-ATP. This chain is Light-independent protochlorophyllide reductase iron-sulfur ATP-binding protein, found in Methylorubrum populi (strain ATCC BAA-705 / NCIMB 13946 / BJ001) (Methylobacterium populi).